Here is a 270-residue protein sequence, read N- to C-terminus: Phosphonates import ATP-binding protein PhnC (270 aa).

One can recognise an ABC transporter domain in the interval 2–245; it reads LVIEGLTCRF…IARELYDLEA (244 aa). 34 to 41 provides a ligand contact to ATP; that stretch reads GRSGAGKS.

Belongs to the ABC transporter superfamily. Phosphonates importer (TC 3.A.1.9.1) family. The complex is composed of two ATP-binding proteins (PhnC), two transmembrane proteins (PhnE) and a solute-binding protein (PhnD).

The protein resides in the cell inner membrane. The catalysed reaction is phosphonate(out) + ATP + H2O = phosphonate(in) + ADP + phosphate + H(+). In terms of biological role, part of the ABC transporter complex PhnCDE involved in phosphonates import. Responsible for energy coupling to the transport system. The polypeptide is Phosphonates import ATP-binding protein PhnC (Rhodopseudomonas palustris (strain BisB5)).